The sequence spans 466 residues: Asparagine--tRNA ligase (466 aa).

This sequence belongs to the class-II aminoacyl-tRNA synthetase family. As to quaternary structure, homodimer.

It localises to the cytoplasm. The catalysed reaction is tRNA(Asn) + L-asparagine + ATP = L-asparaginyl-tRNA(Asn) + AMP + diphosphate + H(+). The chain is Asparagine--tRNA ligase from Aliivibrio fischeri (strain ATCC 700601 / ES114) (Vibrio fischeri).